The primary structure comprises 59 residues: MSIRLRVCVGCVYVRVTVSLPAFNPMRNKIGECTQSHTMCLRAVLLTPHNKKKKHTSCP.

This chain is Protein B3 (B3), found in Homo sapiens (Human).